A 283-amino-acid polypeptide reads, in one-letter code: S-methyl-5'-thioadenosine phosphorylase (283 aa).

A phosphate-binding site is contributed by T18. At K51 the chain carries N6-acetyllysine. Residues 60–61 (RH) and 93–94 (TA) contribute to the phosphate site. Substrate is bound at residue M196. T197 contacts phosphate. 220-222 (DYD) contributes to the substrate binding site.

The protein belongs to the PNP/MTAP phosphorylase family. MTAP subfamily. Homotrimer.

The protein resides in the cytoplasm. Its subcellular location is the nucleus. It catalyses the reaction S-methyl-5'-thioadenosine + phosphate = 5-(methylsulfanyl)-alpha-D-ribose 1-phosphate + adenine. The protein operates within amino-acid biosynthesis; L-methionine biosynthesis via salvage pathway; S-methyl-5-thio-alpha-D-ribose 1-phosphate from S-methyl-5'-thioadenosine (phosphorylase route): step 1/1. Its function is as follows. Catalyzes the reversible phosphorylation of S-methyl-5'-thioadenosine (MTA) to adenine and 5-methylthioribose-1-phosphate. Involved in the breakdown of MTA, a major by-product of polyamine biosynthesis. Responsible for the first step in the methionine salvage pathway after MTA has been generated from S-adenosylmethionine. Has broad substrate specificity with 6-aminopurine nucleosides as preferred substrates. The protein is S-methyl-5'-thioadenosine phosphorylase of Bos taurus (Bovine).